The sequence spans 290 residues: Tegument protein VP22 (290 aa).

Polar residues predominate over residues Ser-98–His-112. Residues Ser-98 to Ser-156 form a disordered region. A compositionally biased stretch (low complexity) spans Val-118 to Pro-142. Positions Ala-146–Arg-149 match the Nuclear localization signal motif. A Nuclear export signal motif is present at residues Leu-219–Leu-231.

This sequence belongs to the alphaherpesvirinae VP22 tegument protein family. In terms of assembly, interacts with gE (via C-terminus); this interaction is necessary for the recruitment of VP22 to the Golgi and its packaging into virions. Interacts with gM (via C-terminus). Interacts with VP16; this interaction allows the formation of a tripartite complex composed of VP16, VP22 and UL41/VHS. Interacts with the capsid-binding protein UL16. Interacts with host CGAS. Highly phosphorylated in the host cell. Packaging is selective for underphosphorylated forms.

It is found in the virion tegument. The protein resides in the host cytoplasm. It localises to the host nucleus. Its subcellular location is the host Golgi apparatus. In terms of biological role, tegument protein that plays different roles during the time course of infection. Participates in both the accumulation of viral mRNAs and viral protein translation at late time of infection. Modulates the RNase activity of the virion host shutoff protein UL41 probably to ensure necessary levels of key cellular mRNAs and proteins. Plays a role in microtubule reorganization that occurs after viral infection by stabilizing microtubule network. Plays a role in the inhibition of host innate immune system by targeting the CGAS enzymatic activity which is the principal cytosolic DNA sensor that detects invading viral DNA. Acts by mediating disruption of liquid-like droplets in which CGAS is activated, thereby preventing CGAS activity. This Equus caballus (Horse) protein is Tegument protein VP22 (11).